The sequence spans 275 residues: Dermonecrotic toxin SpeSicTox-betaIIA3i (275 aa).

His-5 is a catalytic residue. Mg(2+)-binding residues include Glu-25 and Asp-27. Catalysis depends on His-41, which acts as the Nucleophile. 2 cysteine pairs are disulfide-bonded: Cys-45-Cys-51 and Cys-47-Cys-190. Mg(2+) is bound at residue Asp-85.

It belongs to the arthropod phospholipase D family. Class II subfamily. The cofactor is Mg(2+). In terms of tissue distribution, expressed by the venom gland.

It localises to the secreted. The enzyme catalyses an N-(acyl)-sphingosylphosphocholine = an N-(acyl)-sphingosyl-1,3-cyclic phosphate + choline. It carries out the reaction an N-(acyl)-sphingosylphosphoethanolamine = an N-(acyl)-sphingosyl-1,3-cyclic phosphate + ethanolamine. It catalyses the reaction a 1-acyl-sn-glycero-3-phosphocholine = a 1-acyl-sn-glycero-2,3-cyclic phosphate + choline. The catalysed reaction is a 1-acyl-sn-glycero-3-phosphoethanolamine = a 1-acyl-sn-glycero-2,3-cyclic phosphate + ethanolamine. In terms of biological role, dermonecrotic toxins cleave the phosphodiester linkage between the phosphate and headgroup of certain phospholipids (sphingolipid and lysolipid substrates), forming an alcohol (often choline) and a cyclic phosphate. This toxin acts on sphingomyelin (SM). It may also act on ceramide phosphoethanolamine (CPE), lysophosphatidylcholine (LPC) and lysophosphatidylethanolamine (LPE), but not on lysophosphatidylserine (LPS), and lysophosphatidylglycerol (LPG). It acts by transphosphatidylation, releasing exclusively cyclic phosphate products as second products. Induces dermonecrosis, hemolysis, increased vascular permeability, edema, inflammatory response, and platelet aggregation. The polypeptide is Dermonecrotic toxin SpeSicTox-betaIIA3i (Sicarius peruensis (Six-eyed sand spider)).